Reading from the N-terminus, the 386-residue chain is tRNA N6-adenosine threonylcarbamoyltransferase (386 aa).

Histidine 141, histidine 145, and tyrosine 162 together coordinate a divalent metal cation. Substrate-binding positions include 162–166 (YVSGG), aspartate 194, glycine 209, glutamate 213, and asparagine 315. Residue aspartate 344 coordinates a divalent metal cation.

The protein belongs to the KAE1 / TsaD family. As to quaternary structure, component of the EKC/KEOPS complex composed of at least BUD32, CGI121, GON7, KAE1 and PCC1; the whole complex dimerizes. The cofactor is a divalent metal cation.

It is found in the cytoplasm. The protein localises to the nucleus. The catalysed reaction is L-threonylcarbamoyladenylate + adenosine(37) in tRNA = N(6)-L-threonylcarbamoyladenosine(37) in tRNA + AMP + H(+). Functionally, component of the EKC/KEOPS complex that is required for the formation of a threonylcarbamoyl group on adenosine at position 37 (t(6)A37) in tRNAs that read codons beginning with adenine. The complex is probably involved in the transfer of the threonylcarbamoyl moiety of threonylcarbamoyl-AMP (TC-AMP) to the N6 group of A37. KAE1 likely plays a direct catalytic role in this reaction, but requires other protein(s) of the complex to fulfill this activity. The EKC/KEOPS complex also promotes both telomere uncapping and telomere elongation. The complex is required for efficient recruitment of transcriptional coactivators. This Saccharomyces cerevisiae (strain ATCC 204508 / S288c) (Baker's yeast) protein is tRNA N6-adenosine threonylcarbamoyltransferase.